The following is a 156-amino-acid chain: ATP synthase subunit b (156 aa).

The helical transmembrane segment at 12-32 (VAFFIFVLFCMKFVWPPVIAA) threads the bilayer.

The protein belongs to the ATPase B chain family. In terms of assembly, F-type ATPases have 2 components, F(1) - the catalytic core - and F(0) - the membrane proton channel. F(1) has five subunits: alpha(3), beta(3), gamma(1), delta(1), epsilon(1). F(0) has three main subunits: a(1), b(2) and c(10-14). The alpha and beta chains form an alternating ring which encloses part of the gamma chain. F(1) is attached to F(0) by a central stalk formed by the gamma and epsilon chains, while a peripheral stalk is formed by the delta and b chains.

The protein resides in the cell inner membrane. F(1)F(0) ATP synthase produces ATP from ADP in the presence of a proton or sodium gradient. F-type ATPases consist of two structural domains, F(1) containing the extramembraneous catalytic core and F(0) containing the membrane proton channel, linked together by a central stalk and a peripheral stalk. During catalysis, ATP synthesis in the catalytic domain of F(1) is coupled via a rotary mechanism of the central stalk subunits to proton translocation. In terms of biological role, component of the F(0) channel, it forms part of the peripheral stalk, linking F(1) to F(0). This Pseudomonas aeruginosa (strain UCBPP-PA14) protein is ATP synthase subunit b.